The chain runs to 326 residues: Acetyl-coenzyme A carboxylase carboxyl transferase subunit alpha (326 aa).

One can recognise a CoA carboxyltransferase C-terminal domain in the interval Gln44–Thr298.

This sequence belongs to the AccA family. As to quaternary structure, acetyl-CoA carboxylase is a heterohexamer composed of biotin carboxyl carrier protein (AccB), biotin carboxylase (AccC) and two subunits each of ACCase subunit alpha (AccA) and ACCase subunit beta (AccD).

It localises to the cytoplasm. The catalysed reaction is N(6)-carboxybiotinyl-L-lysyl-[protein] + acetyl-CoA = N(6)-biotinyl-L-lysyl-[protein] + malonyl-CoA. It participates in lipid metabolism; malonyl-CoA biosynthesis; malonyl-CoA from acetyl-CoA: step 1/1. In terms of biological role, component of the acetyl coenzyme A carboxylase (ACC) complex. First, biotin carboxylase catalyzes the carboxylation of biotin on its carrier protein (BCCP) and then the CO(2) group is transferred by the carboxyltransferase to acetyl-CoA to form malonyl-CoA. This chain is Acetyl-coenzyme A carboxylase carboxyl transferase subunit alpha, found in Synechocystis sp. (strain ATCC 27184 / PCC 6803 / Kazusa).